The following is a 309-amino-acid chain: Glutaminase (309 aa).

Substrate-binding residues include Ser64, Asn114, Glu160, Asn167, Tyr191, Tyr243, and Val261.

Belongs to the glutaminase family. As to quaternary structure, homotetramer.

It carries out the reaction L-glutamine + H2O = L-glutamate + NH4(+). The chain is Glutaminase from Rhizobium johnstonii (strain DSM 114642 / LMG 32736 / 3841) (Rhizobium leguminosarum bv. viciae).